Here is a 388-residue protein sequence, read N- to C-terminus: Protein DVU_0534 (388 aa).

10 helical membrane passes run L10–L31, L57–G78, A89–Y106, E130–V144, L166–I191, L199–I222, A254–I265, M291–V306, F316–N328, and I354–Y368.

It belongs to the NrfD family.

Its subcellular location is the cell membrane. In terms of biological role, HMWC (high-molecular-weight cytochrome c), ORF2, ORF3, ORF4, ORF5 and ORF6 in the HMC operon form a transmembrane protein complex that allows electron flow from the periplasmic hydrogenase to the cytoplasmic enzymes that catalyze reduction of sulfates. This Nitratidesulfovibrio vulgaris (strain ATCC 29579 / DSM 644 / CCUG 34227 / NCIMB 8303 / VKM B-1760 / Hildenborough) (Desulfovibrio vulgaris) protein is Protein DVU_0534.